The following is a 342-amino-acid chain: Methyltransferase ungE' (342 aa).

Belongs to the methyltransferase superfamily.

It participates in secondary metabolite biosynthesis. In terms of biological role, methyltransferase; part of the gene cluster that mediates the biosynthesis of the unguisins, gamma-aminobutyric acid (GABA)-containing fungal cyclic heptapeptides with the amino acid sequence cyclo-(D-Ala1-D-Val2-L-Leu3-beta-MePhe4-D-Ala5-D-Trp6-GABA7) for unguisin H and cyclo-(D-Ala1-D-Ala2-L-Leu3-beta-MePhe4-D-Ala5-D-Trp6-GABA7) for unguisin I. Within the pathway, the methyltransferase ungE' is probably involved in the synthesis of the (2R,3R)-beta-methylphenylalanine residue incorporated by the module 4 of the nonribosomal peptide synthetase (NRPS) ungA'. The alanine racemase ungC' catalyzes the interconversion of L-alanine and D-alanine, providing the D-alanine which is accepted by the first adenylation domain of ungA'. UngA' is the main enzyme within the cluster which condenses the 7 residues using its respective 7 modules. The terminal condensation domain (Ct) is involved in cyclization with D-alanine and thereby releasing of unguisins H and I. Finally, the hydrolase ungD' catalyzes the hydrolysis between the D-tryptophan and GABA residues of unguisins H and I to produce the corresponding linear peptides. The chain is Methyltransferase ungE' from Aspergillus campestris (strain IBT 28561).